Reading from the N-terminus, the 1486-residue chain is Chromosome partition protein MukB (1486 aa).

34–41 (GGNGAGKS) serves as a coordination point for ATP. Coiled coils occupy residues 326–418 (LEAD…QYNQ), 444–480 (LETF…QAYQ), and 509–603 (RHLA…RAPV). The tract at residues 666–783 (PGGSEDQRLN…EVPLFGRAAR (118 aa)) is flexible hinge. 3 coiled-coil regions span residues 835–923 (EAEI…AKLE), 977–1115 (EMLS…TAKA), and 1209–1266 (VEAI…QNVS).

It belongs to the SMC family. MukB subfamily. In terms of assembly, homodimerization via its hinge domain. Binds to DNA via its C-terminal region. Interacts, and probably forms a ternary complex, with MukE and MukF via its C-terminal region. The complex formation is stimulated by calcium or magnesium. Interacts with tubulin-related protein FtsZ.

The protein resides in the cytoplasm. It is found in the nucleoid. Its function is as follows. Plays a central role in chromosome condensation, segregation and cell cycle progression. Functions as a homodimer, which is essential for chromosome partition. Involved in negative DNA supercoiling in vivo, and by this means organize and compact chromosomes. May achieve or facilitate chromosome segregation by condensation DNA from both sides of a centrally located replisome during cell division. The sequence is that of Chromosome partition protein MukB from Escherichia coli O127:H6 (strain E2348/69 / EPEC).